The chain runs to 417 residues: Ig-like V-type domain-containing protein FAM187A (417 aa).

Residues 1 to 18 form the signal peptide; the sequence is MSLAHTTVLLWAWGSLQA. Residues 19-377 are Extracellular-facing; it reads FEIVEKESVF…ASLSDPETRT (359 aa). Asn-248 and Asn-318 each carry an N-linked (GlcNAc...) asparagine glycan. The region spanning 268–362 is the Ig-like V-type domain; sequence PWVPQVPIQF…IAGFRLGVIT (95 aa). The cysteines at positions 290 and 346 are disulfide-linked. The helical transmembrane segment at 378-398 threads the bilayer; it reads AIELTLMGYLLITIFFITIHL. Residues 399 to 417 lie on the Cytoplasmic side of the membrane; it reads CRCCCQSRCCPNFSAQTLL.

This sequence belongs to the FAM187 family.

It localises to the membrane. This chain is Ig-like V-type domain-containing protein FAM187A (Fam187a), found in Mus musculus (Mouse).